The chain runs to 315 residues: Protein OPG185 (315 aa).

The N-terminal stretch at 1 to 16 is a signal peptide; sequence MTRLPILLLLISLVYA. Residues 17–121 enclose the Ig-like V-type domain; that stretch reads TPFPQTSKKI…NDTDKVDYEE (105 aa). Topologically, residues 17-279 are virion surface; that stretch reads TPFPQTSKKI…SNYKTKDFVE (263 aa). Residues Cys-34 and Cys-103 are joined by a disulfide bond. N-linked (GlcNAc...) asparagine; by host glycans are attached at residues Asn-37, Asn-69, Asn-112, and Asn-161. The disordered stretch occupies residues 194-213; that stretch reads TVSATSGESTTDETPEPITD. The N-linked (GlcNAc...) asparagine; by host glycan is linked to Asn-254. A helical transmembrane segment spans residues 280 to 303; sequence IFGITALIILSAVAIFCITYYICN. Over 304–315 the chain is Intravirion; that stretch reads KRSRKYKTENKV.

It belongs to the orthopoxvirus OPG185 family. Heterodimerizes with OPG040. The heterodimer OPG185-OPG040 interacts with components of the entry fusion complex OPG143 and OPG094. Heterodimer with C3/VPC protein; disulfide-linked. In terms of processing, glycosylated; contains phosphate and sulfate-substituted glycans. O-glycosylation is required for hemagglutination and hemadsorption activities of infected cell membranes.

The protein resides in the virion membrane. Its subcellular location is the host membrane. Functionally, prevents cell to cell fusion by interacting with and directing the viral OPG040 protein on the host plasma membrane. The OPG185-OPG040 complex associates with components of the entry fusion complex (EFC) presumably to avoid superinfection and syncytium formation. Via its interaction with C3/VCP protein, protects the infected cell and probably also the extracellular enveloped virus from complement attack. In Vaccinia virus (strain Copenhagen) (VACV), this protein is Protein OPG185 (OPG185).